We begin with the raw amino-acid sequence, 171 residues long: Putative phosphoesterase ABC1741 (171 aa).

The Proton donor role is filled by His-34. Short sequence motifs (HXTX) lie at residues 34 to 37 (HITL) and 116 to 119 (HITI). His-116 (proton acceptor) is an active-site residue.

This sequence belongs to the 2H phosphoesterase superfamily. YjcG family.

The sequence is that of Putative phosphoesterase ABC1741 from Shouchella clausii (strain KSM-K16) (Alkalihalobacillus clausii).